The following is a 151-amino-acid chain: D-ribose pyranase 1 (151 aa).

Histidine 20 serves as the catalytic Proton donor. Residues aspartate 28, histidine 98, and 121 to 123 (WGN) each bind substrate.

This sequence belongs to the RbsD / FucU family. RbsD subfamily. As to quaternary structure, homodecamer.

It localises to the cytoplasm. The catalysed reaction is beta-D-ribopyranose = beta-D-ribofuranose. Its pathway is carbohydrate metabolism; D-ribose degradation; D-ribose 5-phosphate from beta-D-ribopyranose: step 1/2. In terms of biological role, catalyzes the interconversion of beta-pyran and beta-furan forms of D-ribose. This Streptomyces griseus subsp. griseus (strain JCM 4626 / CBS 651.72 / NBRC 13350 / KCC S-0626 / ISP 5235) protein is D-ribose pyranase 1.